Reading from the N-terminus, the 157-residue chain is Stalk-specific protein A (157 aa).

The first 19 residues, 1 to 19 (MRSILILLSLLLTIAFASA), serve as a signal peptide directing secretion.

The protein localises to the secreted. The protein is Stalk-specific protein A (staA) of Dictyostelium discoideum (Social amoeba).